The following is a 287-amino-acid chain: mRNA-capping enzyme regulatory subunit (287 aa).

It belongs to the chordopoxvirinae mRNA-capping enzyme regulatory subunit family. In terms of assembly, heterodimer of a catalytic and a regulatory subunit. Intrinsic methyltransferase activity of the catalytic subunit is weak and needs to be stimulated 30- to 50-fold by the regulatory subunit, which is itself catalytically inert.

Its subcellular location is the virion. Regulatory subunit of the mRNA cap enzyme which stabilizes the catalytic subunit and enhances its methyltransferase activity through an allosteric mechanism. Heterodimeric mRNA capping enzyme catalyzes the linkage of a N7-methyl-guanosine moiety to the first transcribed nucleotide (cap 0 structure), whereas the polymerase associated VP39 is responsible for a second methylation at the 2'-O position of the ribose (cap 1 structure). In terms of biological role, the heterodimeric enzyme is also involved in early viral gene transcription termination and intermediate viral gene transcription initiation. Early gene transcription termination requires the termination factor VTF, the DNA-dependent ATPase NPH-I and the Rap94 subunit of the viral RNA polymerase, as well as the presence of a specific termination motif. Binds, together with RAP94, to the termination motif 5'-UUUUUNU-3' in the nascent early mRNA. In Vaccinia virus (strain Ankara) (VACV), this protein is mRNA-capping enzyme regulatory subunit.